The following is a 356-amino-acid chain: S-adenosylmethionine:tRNA ribosyltransferase-isomerase (356 aa).

This sequence belongs to the QueA family. As to quaternary structure, monomer.

The protein resides in the cytoplasm. The catalysed reaction is 7-aminomethyl-7-carbaguanosine(34) in tRNA + S-adenosyl-L-methionine = epoxyqueuosine(34) in tRNA + adenine + L-methionine + 2 H(+). The protein operates within tRNA modification; tRNA-queuosine biosynthesis. Functionally, transfers and isomerizes the ribose moiety from AdoMet to the 7-aminomethyl group of 7-deazaguanine (preQ1-tRNA) to give epoxyqueuosine (oQ-tRNA). In Escherichia coli O6:H1 (strain CFT073 / ATCC 700928 / UPEC), this protein is S-adenosylmethionine:tRNA ribosyltransferase-isomerase.